We begin with the raw amino-acid sequence, 345 residues long: uncharacterized protein (345 aa).

Residues 1–198 (MDVLSAVLLA…LSEGLLDHEE (198 aa)) enclose the CNNM transmembrane domain. 2 helical membrane passes run 3 to 23 (VLSA…FVGA) and 95 to 115 (VPPA…HVLL). 2 consecutive CBS domains span residues 217–280 (AVPL…PQTV) and 285–342 (VVRP…MRDG). The chain crosses the membrane as a helical span at residues 312-332 (LALVTADNGSVVGMVALEDVV).

The protein belongs to the TerC family.

Its subcellular location is the cell membrane. This is an uncharacterized protein from Mycobacterium tuberculosis (strain ATCC 25618 / H37Rv).